A 142-amino-acid polypeptide reads, in one-letter code: Nucleoside diphosphate kinase (142 aa).

Residues lysine 11, phenylalanine 59, arginine 87, threonine 93, arginine 104, and asparagine 114 each coordinate ATP. Histidine 117 functions as the Pros-phosphohistidine intermediate in the catalytic mechanism.

This sequence belongs to the NDK family. In terms of assembly, homotetramer. The cofactor is Mg(2+).

The protein localises to the cytoplasm. The catalysed reaction is a 2'-deoxyribonucleoside 5'-diphosphate + ATP = a 2'-deoxyribonucleoside 5'-triphosphate + ADP. It catalyses the reaction a ribonucleoside 5'-diphosphate + ATP = a ribonucleoside 5'-triphosphate + ADP. Major role in the synthesis of nucleoside triphosphates other than ATP. The ATP gamma phosphate is transferred to the NDP beta phosphate via a ping-pong mechanism, using a phosphorylated active-site intermediate. The sequence is that of Nucleoside diphosphate kinase from Wigglesworthia glossinidia brevipalpis.